The chain runs to 189 residues: MKKYSKKDRQMKLQVAIEENPFITDEQLAEKFGVSVQTIRLDRVALSIPELRERIKHVASVNYADAVKSLPIDEVIGEIIDIQLSKSAISIFDVRSEHVFKRNKIARGHHLFAQANSLATAVIPNELALTTQATVRFVRSVNEGERIIAKAKVRPATDNRAITIVDVKSYVGDELVLKGKFEMYHATQK.

Belongs to the FapR family.

Functionally, transcriptional factor involved in regulation of membrane lipid biosynthesis by repressing genes involved in fatty acid and phospholipid metabolism. The chain is Transcription factor FapR from Listeria welshimeri serovar 6b (strain ATCC 35897 / DSM 20650 / CCUG 15529 / CIP 8149 / NCTC 11857 / SLCC 5334 / V8).